Consider the following 338-residue polypeptide: Ribosomal RNA small subunit methyltransferase H (338 aa).

S-adenosyl-L-methionine-binding positions include 53 to 55 (GGH), Asp72, Tyr99, Asp123, and Gln130. Positions 277–298 (ITPRSKSKSPEGLPVELPGMGP) are disordered.

It belongs to the methyltransferase superfamily. RsmH family.

It is found in the cytoplasm. It catalyses the reaction cytidine(1402) in 16S rRNA + S-adenosyl-L-methionine = N(4)-methylcytidine(1402) in 16S rRNA + S-adenosyl-L-homocysteine + H(+). Its function is as follows. Specifically methylates the N4 position of cytidine in position 1402 (C1402) of 16S rRNA. This is Ribosomal RNA small subunit methyltransferase H from Rhodococcus opacus (strain B4).